We begin with the raw amino-acid sequence, 66 residues long: KEGYIVNYHDGCKYACVKLGDNDYCLRECKLRYGKGAGGYCYAFGCWCTHLYEQAVVWPLPKKRCN.

The region spanning lysine 1–asparagine 66 is the LCN-type CS-alpha/beta domain. Disulfide bonds link cysteine 12-cysteine 65, cysteine 16-cysteine 41, cysteine 25-cysteine 46, and cysteine 29-cysteine 48.

As to expression, expressed by the venom gland.

Its subcellular location is the secreted. In terms of biological role, beta toxins bind voltage-independently at site-4 of sodium channels (Nav) and shift the voltage of activation toward more negative potentials thereby affecting sodium channel activation and promoting spontaneous and repetitive firing. This toxin acts on human Nav1.1/SCN1A, Nav1.2/SCN2A, Nav1.4/SCN4A and Nav1.6/SCN8A voltage-gated sodium channels. Also, it reduces the peak of sodium currents in Nav1.5/SCN5A at all potentials. In vivo, is lethal to mice when intraperitoneally injected at a dose of 5ug. No activity is observed when injected into crickets or woodlice. The chain is Beta-mammal toxin Co2 from Centruroides ornatus (Scorpion).